A 328-amino-acid polypeptide reads, in one-letter code: Ubiquitin-conjugating enzyme E2 Z (328 aa).

Residues Gln-71–Val-225 enclose the UBC core domain. The Glycyl thioester intermediate role is filled by Cys-160. Residues Arg-295–Pro-328 are disordered. Residues Asp-312 to Pro-328 are compositionally biased toward low complexity.

It belongs to the ubiquitin-conjugating enzyme family.

The protein resides in the cytoplasm. It localises to the nucleus. It catalyses the reaction S-ubiquitinyl-[E1 ubiquitin-activating enzyme]-L-cysteine + [E2 ubiquitin-conjugating enzyme]-L-cysteine = [E1 ubiquitin-activating enzyme]-L-cysteine + S-ubiquitinyl-[E2 ubiquitin-conjugating enzyme]-L-cysteine.. It participates in protein modification; protein ubiquitination. Catalyzes the covalent attachment of ubiquitin to other proteins. May be involved in apoptosis regulation. This chain is Ubiquitin-conjugating enzyme E2 Z (ube2z), found in Danio rerio (Zebrafish).